Reading from the N-terminus, the 243-residue chain is Variant surface antigen E (243 aa).

Residues 1–29 form the signal peptide; sequence MKKSIFSKKLLVSFGSLVTLAAIPLIAIS. Residue Cys30 is the site of N-palmitoyl cysteine attachment. A lipid anchor (S-diacylglycerol cysteine) is attached at Cys30. Residues 34–243 are disordered; the sequence is TDNLSQSQQP…TTSDGQNQNK (210 aa). A compositionally biased stretch (low complexity) spans 52-92; sequence GTNTENGSNNGSGSGTTNSSGGTNQSGSASGNGSSNSSVST. Residues 93-243 show a composition bias toward polar residues; the sequence is PDGQHSNPSN…TTSDGQNQNK (151 aa). 11 tandem repeats follow at residues 97-109, 110-122, 123-135, 136-148, 149-161, 162-174, 175-187, 188-200, 201-213, 214-226, and 227-239. The segment at 97–239 is 11 X 13 AA tandem repeats; it reads HSNPSNPTTS…PSNPTTSDGQ (143 aa).

It localises to the cell membrane. Functionally, responsible for the antigenic diversity for host adaptation. Expression in E.coli of a construct containing vlpD, vlpE, and vlpF yields antigenically distinguishable products corresponding to each gene. The polypeptide is Variant surface antigen E (vlpE) (Mesomycoplasma hyorhinis (Mycoplasma hyorhinis)).